Consider the following 404-residue polypeptide: Glycosyltransferase GlyB (404 aa).

Residues 1–267 (MNTKSIVFNA…ILLRKDIISR (267 aa)) are GT8 domain. Residues 9–14 (NADNDY) and 103–104 (DS) each bind UDP. Residues D103, D105, and H228 each contribute to the Mn(2+) site. Residue 228 to 233 (HYTGVK) coordinates UDP.

This sequence in the N-terminal section; belongs to the glycosyltransferase 8 family.

In terms of biological role, may be involved in the polymorphic O-glycosylation of the serine-rich repeat protein PsrP. Has equal hydrolytic activity against both UDP-galactose and UDP-glucose; no glycosyltransferase activity has been seen with tested substrates. This is Glycosyltransferase GlyB from Streptococcus pneumoniae serotype 4 (strain ATCC BAA-334 / TIGR4).